The sequence spans 76 residues: Acyl carrier protein (76 aa).

The region spanning 1–76 (MATFDKVKDI…DVVNYIEQNQ (76 aa)) is the Carrier domain. An O-(pantetheine 4'-phosphoryl)serine modification is found at serine 36.

The protein belongs to the acyl carrier protein (ACP) family. In terms of processing, 4'-phosphopantetheine is transferred from CoA to a specific serine of apo-ACP by AcpS. This modification is essential for activity because fatty acids are bound in thioester linkage to the sulfhydryl of the prosthetic group.

The protein resides in the cytoplasm. It functions in the pathway lipid metabolism; fatty acid biosynthesis. Its function is as follows. Carrier of the growing fatty acid chain in fatty acid biosynthesis. The protein is Acyl carrier protein of Natranaerobius thermophilus (strain ATCC BAA-1301 / DSM 18059 / JW/NM-WN-LF).